A 1078-amino-acid chain; its full sequence is Nonribosomal peptide synthetase aneB (1078 aa).

The tract at residues phenylalanine 20–isoleucine 417 is adenylation. In terms of domain architecture, Carrier spans methionine 559–proline 635. Serine 596 carries the O-(pantetheine 4'-phosphoryl)serine modification. Residues asparagine 699–threonine 1013 are condensation.

This sequence belongs to the NRP synthetase family.

It catalyses the reaction holo-[peptidyl-carrier protein] + L-proline + ATP = L-prolyl-[peptidyl-carrier protein] + AMP + diphosphate. The protein operates within secondary metabolite biosynthesis. In terms of biological role, nonribosomal peptide synthetase; part of the gene cluster that mediates the biosynthesis of aculenes, a unique type of norsesquiterpenes that contain a nordaucane skeleton linked to an L-proline moiety and are of mixed biosynthetic origin. The pathway begins with the synthesis of dauca-4,7-diene by the terpene cyclase aneC using farnesyl pyrophosphate (FPP) as substrate. The cytochrome P450 monooxygenase aneF then performs the initial oxidation at C-12 of dauca-4,7-diene to yield asperaculane D. Asperaculane D is substrate of the cytochrome P450 monooxygenase aneD for C-10 hydroxylation to yield asperaculane E. The cytochrome P450 monooxygenase aneG then converts asperaculane E into aculene D via C-2 oxidation. The monomodular nonribosomal peptide synthase aneB adenylates L-proline and the thiohydrolase aneE transfers this activated L-proline derivative to aculenes D and C to produce respectively aculenes B and A. The dioxygenase aneA converts aculene D into aculene C, and aculene B into aculene A by introducing the 5,6-alkene moiety. Asperculanes A, B, C and F, as well as 14-prolyl asperculane C, might be shunt products of the pathway. This is Nonribosomal peptide synthetase aneB from Aspergillus aculeatus (strain ATCC 16872 / CBS 172.66 / WB 5094).